Here is a 115-residue protein sequence, read N- to C-terminus: Large ribosomal subunit protein uL18 (115 aa).

A disordered region spans residues 1–24; that stretch reads MISKPDKNKLRQKRHTRVRGKISG. The span at 10–20 shows a compositional bias: basic residues; that stretch reads LRQKRHTRVRG.

It belongs to the universal ribosomal protein uL18 family. As to quaternary structure, part of the 50S ribosomal subunit; part of the 5S rRNA/L5/L18/L25 subcomplex. Contacts the 5S and 23S rRNAs.

Functionally, this is one of the proteins that bind and probably mediate the attachment of the 5S RNA into the large ribosomal subunit, where it forms part of the central protuberance. The sequence is that of Large ribosomal subunit protein uL18 from Lactococcus lactis subsp. cremoris (strain MG1363).